Consider the following 438-residue polypeptide: MTTSPGVPEPSAQLLRLAAEVRQAAMALGQSDDNQRRKALMAMANALLSSSEQIVRANQLDLEKARTEGLASALMARLRLDESKLNSAIEGLRQLAQLTDPLGLRQLHRELDQDLVLERITVPLGVLGVIFEARPDAVIQITSLAIRSGNGALLKGGSEASHTNQAIIEALKNGLAETEIDPEAIALLKTRQESLALLRLDGLVDLIIPRGSNELVRFIQDNTRIPVLGHADGICHLYLDAAADLKQALQIAIDSKTQYPAACNSIETLLIHQSIAPSFLELAIPAFLQAGVRLLGDSASRALGVEESASEEDWATEYLDLILSVKVVPDLEGALDHIRRYSSRHTEAIVSNDQETAERFLQAVDSAGVFHNCSTRFADGFRYGFGAEVGISTQTLPPRGPVGLEGLVTYRYRLRGQGHIVADYANGECMFTHRDLPL.

The protein belongs to the gamma-glutamyl phosphate reductase family.

The protein localises to the cytoplasm. It carries out the reaction L-glutamate 5-semialdehyde + phosphate + NADP(+) = L-glutamyl 5-phosphate + NADPH + H(+). It functions in the pathway amino-acid biosynthesis; L-proline biosynthesis; L-glutamate 5-semialdehyde from L-glutamate: step 2/2. Its function is as follows. Catalyzes the NADPH-dependent reduction of L-glutamate 5-phosphate into L-glutamate 5-semialdehyde and phosphate. The product spontaneously undergoes cyclization to form 1-pyrroline-5-carboxylate. This chain is Gamma-glutamyl phosphate reductase, found in Prochlorococcus marinus (strain MIT 9313).